The chain runs to 484 residues: HTH-type transcriptional regulator TauR (484 aa).

The HTH gntR-type domain occupies 16-84 (GSLQHRLRQM…GRSGTFVSAA (69 aa)). Positions 44–63 (TRALAAHLGVARITVTLAYA) form a DNA-binding region, H-T-H motif. Lys-330 carries the N6-(pyridoxal phosphate)lysine modification.

The protein in the C-terminal section; belongs to the class-I pyridoxal-phosphate-dependent aminotransferase family. Pyridoxal 5'-phosphate serves as cofactor.

Its function is as follows. Transcriptional activator, which is essential for taurine-dependent expression of the tpa-tauR-xsc operon. Acts by binding to direct repeats in the promoter region. The chain is HTH-type transcriptional regulator TauR from Rhodobacter capsulatus (strain ATCC BAA-309 / NBRC 16581 / SB1003).